The following is a 62-amino-acid chain: Double zinc ribbon protein TK0111 (62 aa).

Residues Cys-13, Cys-16, Cys-31, Cys-34, Cys-42, Cys-45, Cys-54, and Cys-57 each coordinate Zn(2+).

In terms of assembly, crystallized in association with 70S ribosomes. Zn(2+) serves as cofactor.

This Thermococcus kodakarensis (strain ATCC BAA-918 / JCM 12380 / KOD1) (Pyrococcus kodakaraensis (strain KOD1)) protein is Double zinc ribbon protein TK0111.